A 75-amino-acid polypeptide reads, in one-letter code: Small ribosomal subunit protein bS18 (75 aa).

It belongs to the bacterial ribosomal protein bS18 family. As to quaternary structure, part of the 30S ribosomal subunit. Forms a tight heterodimer with protein bS6.

Functionally, binds as a heterodimer with protein bS6 to the central domain of the 16S rRNA, where it helps stabilize the platform of the 30S subunit. This is Small ribosomal subunit protein bS18 from Buchnera aphidicola subsp. Cinara cedri (strain Cc).